The sequence spans 64 residues: Large ribosomal subunit protein bL32 (64 aa).

Over residues 1–16 the composition is skewed to basic residues; the sequence is MAVPKHRKSKAKKRSR. The segment at 1–22 is disordered; the sequence is MAVPKHRKSKAKKRSRQAANDK.

It belongs to the bacterial ribosomal protein bL32 family.

The chain is Large ribosomal subunit protein bL32 from Brachyspira hyodysenteriae (strain ATCC 49526 / WA1).